The primary structure comprises 471 residues: Putative multidrug resistance protein MdtD (471 aa).

The next 13 membrane-spanning stretches (helical) occupy residues 12–32 (LWIV…VNTA), 49–69 (MIIV…GWLA), 77–97 (IFFT…QAST), 102–124 (VMAR…LTVM), 138–158 (FVTL…GVLV), 165–185 (WIFL…LCLM), 195–215 (FDLS…LALD), 220–240 (LGIS…ALLL), 263–283 (FSLG…LPFM), 286–306 (VFLQ…MIPM), 329–351 (VLVA…ALAG), 393–413 (LLSM…GLLL), and 431–451 (VFLY…LIFS).

The protein belongs to the major facilitator superfamily. TCR/Tet family.

The protein localises to the cell inner membrane. In Klebsiella pneumoniae subsp. pneumoniae (strain ATCC 700721 / MGH 78578), this protein is Putative multidrug resistance protein MdtD.